The following is a 371-amino-acid chain: Phospho-N-acetylmuramoyl-pentapeptide-transferase (371 aa).

A run of 10 helical transmembrane segments spans residues 25-45 (YLTF…VAMG), 79-99 (TMGG…FADL), 104-124 (VWVV…DDYA), 139-159 (KLIA…IFAP), 179-199 (LVIN…AGFS), 210-230 (GLAI…AYLV), 247-267 (VGEL…FLWY), 274-294 (IFMG…IAVC), 299-319 (LVLG…MIQV), and 348-368 (TVVI…LATL).

It belongs to the glycosyltransferase 4 family. MraY subfamily. The cofactor is Mg(2+).

It is found in the cell inner membrane. It catalyses the reaction UDP-N-acetyl-alpha-D-muramoyl-L-alanyl-gamma-D-glutamyl-meso-2,6-diaminopimeloyl-D-alanyl-D-alanine + di-trans,octa-cis-undecaprenyl phosphate = di-trans,octa-cis-undecaprenyl diphospho-N-acetyl-alpha-D-muramoyl-L-alanyl-D-glutamyl-meso-2,6-diaminopimeloyl-D-alanyl-D-alanine + UMP. The protein operates within cell wall biogenesis; peptidoglycan biosynthesis. In terms of biological role, catalyzes the initial step of the lipid cycle reactions in the biosynthesis of the cell wall peptidoglycan: transfers peptidoglycan precursor phospho-MurNAc-pentapeptide from UDP-MurNAc-pentapeptide onto the lipid carrier undecaprenyl phosphate, yielding undecaprenyl-pyrophosphoryl-MurNAc-pentapeptide, known as lipid I. This chain is Phospho-N-acetylmuramoyl-pentapeptide-transferase, found in Caulobacter sp. (strain K31).